The chain runs to 130 residues: ER membrane protein complex subunit 5 (130 aa).

Over Met-1 to Ser-3 the chain is Cytoplasmic. A helical membrane pass occupies residues Ser-4–Phe-22. Residues Ser-23–Ile-43 are Lumenal-facing. A helical membrane pass occupies residues Asp-44 to Ile-63. Residues Ser-64–His-130 are Cytoplasmic-facing.

This sequence belongs to the membrane magnesium transporter (TC 1.A.67) family. In terms of assembly, component of the ER membrane protein complex (EMC).

It localises to the endoplasmic reticulum membrane. It is found in the golgi apparatus membrane. The protein resides in the early endosome membrane. Its function is as follows. Part of the endoplasmic reticulum membrane protein complex (EMC) that enables the energy-independent insertion into endoplasmic reticulum membranes of newly synthesized membrane proteins. Preferentially accommodates proteins with transmembrane domains that are weakly hydrophobic or contain destabilizing features such as charged and aromatic residues. Involved in the cotranslational insertion of multi-pass membrane proteins in which stop-transfer membrane-anchor sequences become ER membrane spanning helices. It is also required for the post-translational insertion of tail-anchored/TA proteins in endoplasmic reticulum membranes. By mediating the proper cotranslational insertion of N-terminal transmembrane domains in an N-exo topology, with translocated N-terminus in the lumen of the ER, controls the topology of multi-pass membrane proteins like the G protein-coupled receptors. By regulating the insertion of various proteins in membranes, it is indirectly involved in many cellular processes. May be involved in Mg(2+) transport. The protein is ER membrane protein complex subunit 5 of Danio rerio (Zebrafish).